The sequence spans 416 residues: Enterobactin exporter EntS (416 aa).

Topologically, residues 1-21 (MNKQSWLLNLSLLKTHPAFRA) are cytoplasmic. Residues 22 to 42 (VFLARFISIVSLGLLGVAVPV) form a helical membrane-spanning segment. The Periplasmic segment spans residues 43–55 (QIQMMTHSTWQVG). Residues 56 to 76 (LSVTLTGGAMFVGLMVGGVLA) form a helical membrane-spanning segment. At 77–83 (DRYERKK) the chain is on the cytoplasmic side. Residues 84-104 (VILLARGTCGIGFIGLCLNAL) form a helical membrane-spanning segment. Over 105 to 109 (LPEPS) the chain is Periplasmic. Residues 110-130 (LLAIYLLGLWDGFFASLGVTA) traverse the membrane as a helical segment. The Cytoplasmic portion of the chain corresponds to 131–156 (LLAATPALVGRENLMQAGAITMLTVR). The helical transmembrane segment at 157-177 (LGSVNSPMIGGLLLAIGGVAW) threads the bilayer. Residue asparagine 178 is a topological domain, periplasmic. The chain crosses the membrane as a helical span at residues 179–199 (YGLAAAGTFITLLPLLSLPAL). The Cytoplasmic segment spans residues 200–218 (PPPPQPREHPLKSLLAGFR). A helical transmembrane segment spans residues 219 to 239 (FLLASPLVGGIALLGGLLTMA). Over 240 to 256 (SAVRVLYPALADNWQMS) the chain is Periplasmic. A helical membrane pass occupies residues 257 to 277 (AAQIGFLYAAIPLGAAIGALT). Topologically, residues 278 to 287 (SGKLAHSARP) are cytoplasmic. A helical transmembrane segment spans residues 288-307 (GLLMLLSTLGSFLAIGLFGL). Residues 308–313 (MPMWIL) are Periplasmic-facing. Residues 314 to 336 (GVVCLALFGWLSAVSSLLQYTML) form a helical membrane-spanning segment. Residues 337–356 (QTQTPEVMLGRINGLWTAQN) lie on the Cytoplasmic side of the membrane. Residues 357–377 (VTGDAIGAALLGGLGAMMTPV) form a helical membrane-spanning segment. Residue alanine 378 is a topological domain, periplasmic. Residues 379 to 399 (SASASGFGLLIIGVLLLLVLV) traverse the membrane as a helical segment. At 400-416 (ELRHFRQTPPQVTASDS) the chain is on the cytoplasmic side.

The protein belongs to the major facilitator superfamily. EntS (TC 2.A.1.38) family.

The protein resides in the cell inner membrane. Component of an export pathway for enterobactin. The protein is Enterobactin exporter EntS of Shigella dysenteriae serotype 1 (strain Sd197).